An 89-amino-acid polypeptide reads, in one-letter code: Signal recognition particle 19 kDa protein (89 aa).

This sequence belongs to the SRP19 family. Part of the signal recognition particle protein translocation system, which is composed of SRP and FtsY. Archaeal SRP consists of a 7S RNA molecule of 300 nucleotides and two protein subunits: SRP54 and SRP19.

It localises to the cytoplasm. Its function is as follows. Involved in targeting and insertion of nascent membrane proteins into the cytoplasmic membrane. Binds directly to 7S RNA and mediates binding of the 54 kDa subunit of the SRP. This chain is Signal recognition particle 19 kDa protein, found in Methanobrevibacter smithii (strain ATCC 35061 / DSM 861 / OCM 144 / PS).